Here is a 153-residue protein sequence, read N- to C-terminus: Large ribosomal subunit protein uL30 (153 aa).

Belongs to the universal ribosomal protein uL30 family. In terms of assembly, part of the 50S ribosomal subunit.

This chain is Large ribosomal subunit protein uL30, found in Methanocella arvoryzae (strain DSM 22066 / NBRC 105507 / MRE50).